The chain runs to 45 residues: Photosystem II reaction center protein K (45 aa).

Residues 1–8 constitute a propeptide that is removed on maturation; the sequence is METALLLA. The helical transmembrane segment at 24–44 threads the bilayer; the sequence is LPLIPLFFLLLAFVWQASVGF.

Belongs to the PsbK family. PSII is composed of 1 copy each of membrane proteins PsbA, PsbB, PsbC, PsbD, PsbE, PsbF, PsbH, PsbI, PsbJ, PsbK, PsbL, PsbM, PsbT, PsbX, PsbY, PsbZ, Psb30/Ycf12, peripheral proteins PsbO, CyanoQ (PsbQ), PsbU, PsbV and a large number of cofactors. It forms dimeric complexes.

Its subcellular location is the cellular thylakoid membrane. One of the components of the core complex of photosystem II (PSII). PSII is a light-driven water:plastoquinone oxidoreductase that uses light energy to abstract electrons from H(2)O, generating O(2) and a proton gradient subsequently used for ATP formation. It consists of a core antenna complex that captures photons, and an electron transfer chain that converts photonic excitation into a charge separation. This chain is Photosystem II reaction center protein K, found in Microcystis aeruginosa (strain NIES-843 / IAM M-2473).